The primary structure comprises 224 residues: Type VII secretion system protein EsaE (224 aa).

In terms of assembly, interacts with EssD.

Functionally, component of the type VII secretion system (Ess). Plays a role in Esx protein secretion. Plays an essential role in the processing and secretion of EssD. The sequence is that of Type VII secretion system protein EsaE from Staphylococcus aureus (strain USA300).